Consider the following 339-residue polypeptide: DNA-directed RNA polymerase subunit alpha (339 aa).

The segment at 1–233 is alpha N-terminal domain (alpha-NTD); the sequence is MVREKVRIST…DLFIPFLHAE (233 aa). The tract at residues 267 to 339 is alpha C-terminal domain (alpha-CTD); sequence IALKSIFIDQ…FTINLPKNKF (73 aa).

This sequence belongs to the RNA polymerase alpha chain family. In terms of assembly, in plastids the minimal PEP RNA polymerase catalytic core is composed of four subunits: alpha, beta, beta', and beta''. When a (nuclear-encoded) sigma factor is associated with the core the holoenzyme is formed, which can initiate transcription.

It is found in the plastid. It localises to the chloroplast. The enzyme catalyses RNA(n) + a ribonucleoside 5'-triphosphate = RNA(n+1) + diphosphate. In terms of biological role, DNA-dependent RNA polymerase catalyzes the transcription of DNA into RNA using the four ribonucleoside triphosphates as substrates. In Populus trichocarpa (Western balsam poplar), this protein is DNA-directed RNA polymerase subunit alpha.